Consider the following 270-residue polypeptide: uncharacterized protein (270 aa).

It belongs to the GSP E family.

This is an uncharacterized protein from Methanocaldococcus jannaschii (strain ATCC 43067 / DSM 2661 / JAL-1 / JCM 10045 / NBRC 100440) (Methanococcus jannaschii).